The following is a 411-amino-acid chain: Multifunctional CCA protein (411 aa).

G8 and R11 together coordinate ATP. CTP contacts are provided by G8 and R11. Residues D21 and D23 each coordinate Mg(2+). ATP contacts are provided by R91, R143, and R146. R91, R143, and R146 together coordinate CTP. Positions 232–333 constitute an HD domain; the sequence is TGVHVMMVID…MRLLERCDAL (102 aa).

Belongs to the tRNA nucleotidyltransferase/poly(A) polymerase family. Bacterial CCA-adding enzyme type 1 subfamily. As to quaternary structure, monomer. Can also form homodimers and oligomers. The cofactor is Mg(2+). Requires Ni(2+) as cofactor.

The enzyme catalyses a tRNA precursor + 2 CTP + ATP = a tRNA with a 3' CCA end + 3 diphosphate. It carries out the reaction a tRNA with a 3' CCA end + 2 CTP + ATP = a tRNA with a 3' CCACCA end + 3 diphosphate. In terms of biological role, catalyzes the addition and repair of the essential 3'-terminal CCA sequence in tRNAs without using a nucleic acid template. Adds these three nucleotides in the order of C, C, and A to the tRNA nucleotide-73, using CTP and ATP as substrates and producing inorganic pyrophosphate. tRNA 3'-terminal CCA addition is required both for tRNA processing and repair. Also involved in tRNA surveillance by mediating tandem CCA addition to generate a CCACCA at the 3' terminus of unstable tRNAs. While stable tRNAs receive only 3'-terminal CCA, unstable tRNAs are marked with CCACCA and rapidly degraded. In Cupriavidus necator (strain ATCC 17699 / DSM 428 / KCTC 22496 / NCIMB 10442 / H16 / Stanier 337) (Ralstonia eutropha), this protein is Multifunctional CCA protein.